We begin with the raw amino-acid sequence, 391 residues long: Methionine import ATP-binding protein MetN 2 (391 aa).

In terms of domain architecture, ABC transporter spans 44-280 (VHVGKVFATP…PRHGATRALL (237 aa)). 77–84 (GRSGAGKS) serves as a coordination point for ATP.

Belongs to the ABC transporter superfamily. Methionine importer (TC 3.A.1.24) family. In terms of assembly, the complex is composed of two ATP-binding proteins (MetN), two transmembrane proteins (MetI) and a solute-binding protein (MetQ).

The protein resides in the cell inner membrane. It carries out the reaction L-methionine(out) + ATP + H2O = L-methionine(in) + ADP + phosphate + H(+). It catalyses the reaction D-methionine(out) + ATP + H2O = D-methionine(in) + ADP + phosphate + H(+). Its function is as follows. Part of the ABC transporter complex MetNIQ involved in methionine import. Responsible for energy coupling to the transport system. The protein is Methionine import ATP-binding protein MetN 2 of Burkholderia ambifaria (strain ATCC BAA-244 / DSM 16087 / CCUG 44356 / LMG 19182 / AMMD) (Burkholderia cepacia (strain AMMD)).